The primary structure comprises 327 residues: Cobalamin biosynthesis protein CobD (327 aa).

Helical transmembrane passes span 60 to 80 (GMWLTIGLVMACVVLGLVLEL), 82 to 102 (LPFAGTAGAVAEILIVTVLLA), 159 to 179 (DGIVAPAFWFLVGGLPGLFAY), and 304 to 324 (LFWSTMSLMTGLVIAASLIGL).

It belongs to the CobD/CbiB family.

The protein localises to the cell membrane. It functions in the pathway cofactor biosynthesis; adenosylcobalamin biosynthesis. Converts cobyric acid to cobinamide by the addition of aminopropanol on the F carboxylic group. This Brucella anthropi (strain ATCC 49188 / DSM 6882 / CCUG 24695 / JCM 21032 / LMG 3331 / NBRC 15819 / NCTC 12168 / Alc 37) (Ochrobactrum anthropi) protein is Cobalamin biosynthesis protein CobD.